The primary structure comprises 163 residues: MEKLILGLDPGLAVLGFGLIKCIYNSKTEKIDSTSLVDFGVIKTTKKQEMGQRLVTIYEDLHTILNNFKPDLAATEKLFFYRMGNTILVAQARGILILALAQNEIPLIEFTPAQIKQAVTGYGNADKYDVQQAVARELNLEEIPKPDDAADALAVALTASWLN.

Active-site residues include Asp9, Glu76, and Asp148. Mg(2+) contacts are provided by Asp9, Glu76, and Asp148.

Belongs to the RuvC family. As to quaternary structure, homodimer which binds Holliday junction (HJ) DNA. The HJ becomes 2-fold symmetrical on binding to RuvC with unstacked arms; it has a different conformation from HJ DNA in complex with RuvA. In the full resolvosome a probable DNA-RuvA(4)-RuvB(12)-RuvC(2) complex forms which resolves the HJ. The cofactor is Mg(2+).

It is found in the cytoplasm. The enzyme catalyses Endonucleolytic cleavage at a junction such as a reciprocal single-stranded crossover between two homologous DNA duplexes (Holliday junction).. Functionally, the RuvA-RuvB-RuvC complex processes Holliday junction (HJ) DNA during genetic recombination and DNA repair. Endonuclease that resolves HJ intermediates. Cleaves cruciform DNA by making single-stranded nicks across the HJ at symmetrical positions within the homologous arms, yielding a 5'-phosphate and a 3'-hydroxyl group; requires a central core of homology in the junction. The consensus cleavage sequence is 5'-(A/T)TT(C/G)-3'. Cleavage occurs on the 3'-side of the TT dinucleotide at the point of strand exchange. HJ branch migration catalyzed by RuvA-RuvB allows RuvC to scan DNA until it finds its consensus sequence, where it cleaves and resolves the cruciform DNA. In Trichodesmium erythraeum (strain IMS101), this protein is Crossover junction endodeoxyribonuclease RuvC.